The primary structure comprises 291 residues: GTPase Era (291 aa).

Residues 2 to 167 form the Era-type G domain; the sequence is KSGFVSIIGR…LDEIVKYLDK (166 aa). Positions 10–17 are G1; that stretch reads GRTNAGKS. 10 to 17 serves as a coordination point for GTP; the sequence is GRTNAGKS. The interval 36–40 is G2; it reads NATRR. The interval 57–60 is G3; it reads DTPG. Residues 57–61 and 116–119 each bind GTP; these read DTPGL and NKVD. The segment at 116–119 is G4; sequence NKVD. The tract at residues 146–148 is G5; that stretch reads YSS. In terms of domain architecture, KH type-2 spans 186-274; it reads YRDFILESIY…LLKLFVTVKK (89 aa).

It belongs to the TRAFAC class TrmE-Era-EngA-EngB-Septin-like GTPase superfamily. Era GTPase family. Monomer.

It localises to the cytoplasm. The protein resides in the cell inner membrane. Functionally, an essential GTPase that binds both GDP and GTP, with rapid nucleotide exchange. Plays a role in 16S rRNA processing and 30S ribosomal subunit biogenesis and possibly also in cell cycle regulation and energy metabolism. The protein is GTPase Era of Campylobacter jejuni subsp. jejuni serotype O:6 (strain 81116 / NCTC 11828).